Here is a 145-residue protein sequence, read N- to C-terminus: Putative sterol 14-demethylase-like protein (145 aa).

The chain crosses the membrane as a helical span at residues 5–25 (YYTLLKTSVAIIIVFVVAKLI).

The protein belongs to the cytochrome P450 family. As to expression, expressed specifically in roots.

It is found in the membrane. The sequence is that of Putative sterol 14-demethylase-like protein (CYP51G2) from Arabidopsis thaliana (Mouse-ear cress).